The chain runs to 979 residues: Peptidyl-glycine alpha-amidating monooxygenase (979 aa).

Residues 1 to 24 form the signal peptide; it reads MAGRARSRLLLLLGLLALQSSCLA. Residues 1 to 497 are peptidylglycine alpha-hydroxylating monooxygenase; sequence MAGRARSRLL…EGPWEPELAG (497 aa). Positions 25–34 are excised as a propeptide; it reads FRSPLSVFKR. At 35–869 the chain is on the intragranular side; the sequence is FKETTRSFSN…KKLIKDPGSG (835 aa). Cystine bridges form between Cys46–Cys185, Cys80–Cys125, Cys113–Cys130, Cys226–Cys333, and Cys292–Cys314. Positions 106 and 107 each coordinate Cu(2+). Residues His171, His241, His243, and Met313 each contribute to the Cu(2+) site. The tract at residues 498-823 is peptidyl-alpha-hydroxyglycine alpha-amidating lyase; sequence DFHVEEALEW…SRLEVEHRSV (326 aa). 4 NHL repeats span residues 501–544, 570–611, 620–665, and 673–717; these read VEEA…NSFD, AEIL…LEPR, LGRS…FSPS, and GEES…FKTD. A Ca(2+)-binding site is contributed by Val520. Arg533 is a binding site for a protein. His585 contacts Zn(2+). Leu587 contributes to the Ca(2+) binding site. The cysteines at positions 634 and 655 are disulfide-linked. Position 654 (Tyr654) interacts with a protein. His690 serves as a coordination point for Zn(2+). An intrachain disulfide couples Cys702 to Cys713. An a protein-binding site is contributed by Arg706. The N-linked (GlcNAc...) asparagine glycan is linked to Asn765. The stretch at 769 to 812 is one NHL 5 repeat; the sequence is GEIIDVFKPVRKHFDMPHDIVASEDGTVYIGDAHTNTVWKFTLT. A Zn(2+)-binding site is contributed by His786. Position 787 (Asp787) interacts with Ca(2+). The helical transmembrane segment at 870-893 threads the bilayer; it reads VPVVLITTLLVIPVVVLLAIAMFI. At 894-979 the chain is on the cytoplasmic side; the sequence is RWKKSRAFGD…APLPTPAPSS (86 aa). 4 positions are modified to phosphoserine: Ser924, Ser925, Ser935, and Ser948. The tract at residues 931–948 is interaction with RASSF9; the sequence is NFFASRKGYSRKGFDRVS. The disordered stretch occupies residues 943-979; it reads GFDRVSTEGSDQEKDEDDGSESEEEYSAPLPTPAPSS. Position 949 is a phosphothreonine (Thr949). Ser952 bears the Phosphoserine; by UHMK1 mark. Residues 955 to 968 are compositionally biased toward acidic residues; the sequence is EKDEDDGSESEEEY. Ser964 carries the post-translational modification Phosphoserine.

This sequence in the C-terminal section; belongs to the peptidyl-alpha-hydroxyglycine alpha-amidating lyase family. It in the N-terminal section; belongs to the copper type II ascorbate-dependent monooxygenase family. In terms of assembly, monomer. Interacts with RASSF9. Requires Zn(2+) as cofactor. Cu(2+) serves as cofactor.

The protein localises to the cytoplasmic vesicle. It localises to the secretory vesicle membrane. It carries out the reaction a [peptide]-C-terminal glycine + 2 L-ascorbate + O2 = a [peptide]-C-terminal (2S)-2-hydroxyglycine + 2 monodehydro-L-ascorbate radical + H2O. The catalysed reaction is a [peptide]-C-terminal (2S)-2-hydroxyglycine = a [peptide]-C-terminal amide + glyoxylate. The enzyme catalyses N-dodecanoylglycine + 2 L-ascorbate + O2 = N-dodecanoyl-(2S)-hydroxyglycine + 2 monodehydro-L-ascorbate radical + H2O. It catalyses the reaction N-dodecanoyl-(2S)-hydroxyglycine = dodecanamide + glyoxylate. It carries out the reaction N-(9Z,12Z,15Z)-octadecatrienoylglycine + 2 L-ascorbate + O2 = N-(9Z,12Z,15Z)-octadecatrienoyl-(2S)-hydroxyglycine + 2 monodehydro-L-ascorbate radical + H2O. The catalysed reaction is N-(9Z,12Z,15Z)-octadecatrienoyl-(2S)-hydroxyglycine = (9Z,12Z,15Z)-octadecatrienamide + glyoxylate. The enzyme catalyses N-(9Z-octadecenoyl)glycine + 2 L-ascorbate + O2 = N-(9Z-octadecenoyl)-(2S)-hydroxyglycine + 2 monodehydro-L-ascorbate radical + H2O. It catalyses the reaction N-(9Z-octadecenoyl)-(2S)-hydroxyglycine = (9Z)-octadecenamide + glyoxylate. It carries out the reaction N-tetradecanoylglycine + 2 L-ascorbate + O2 = N-tetradecanoyl-(2S)-hydroxyglycine + 2 monodehydro-L-ascorbate radical + H2O. The catalysed reaction is N-tetradecanoyl-(2S)-hydroxyglycine = tetradecamide + glyoxylate. The enzyme catalyses N-decanoylglycine + 2 L-ascorbate + O2 = N-decanoyl-(2S)-hydroxyglycine + 2 monodehydro-L-ascorbate radical + H2O. It catalyses the reaction N-decanoyl-(2S)-hydroxyglycine = decanamide + glyoxylate. It carries out the reaction N-octanoylglycine + 2 L-ascorbate + O2 = N-octanoyl-(2S)-hydroxyglycine + 2 monodehydro-L-ascorbate radical + H2O. The catalysed reaction is N-octanoyl-(2S)-hydroxyglycine = octanamide + glyoxylate. With respect to regulation, PAM activity is inhibited by EDTA, phenylglyoxal and diethyl pyrocarbonate. PAL activity is stimulated by cadmium and inhibited by mercury. Functionally, bifunctional enzyme that catalyzes amidation of the C-terminus of proteins. Alpha-amidation is present at the C-terminus of many endocrine hormones and neuropeptides and is required for their activity. C-terminal amidation also takes place in response to protein fragmentation triggered by oxidative stress, promoting degradation of amidated protein fragments by the proteasome. Alpha-amidation involves two sequential reactions, both of which are catalyzed by separate catalytic domains of the enzyme. The first step, catalyzed by peptidyl alpha-hydroxylating monooxygenase (PHM) domain, is the copper-, ascorbate-, and O2- dependent stereospecific hydroxylation (with S stereochemistry) at the alpha-carbon (C-alpha) of the C-terminal glycine of the peptidylglycine substrate. The second step, catalyzed by the peptidylglycine amidoglycolate lyase (PAL) domain, is the zinc-dependent cleavage of the N-C-alpha bond, producing the alpha-amidated peptide and glyoxylate. Similarly, catalyzes the two-step conversion of an N-fatty acylglycine to a primary fatty acid amide and glyoxylate. In Mus musculus (Mouse), this protein is Peptidyl-glycine alpha-amidating monooxygenase.